A 269-amino-acid polypeptide reads, in one-letter code: Hydroxyethylthiazole kinase (269 aa).

Residue methionine 42 coordinates substrate. ATP contacts are provided by arginine 118 and serine 164. Glycine 191 lines the substrate pocket.

Belongs to the Thz kinase family. Mg(2+) serves as cofactor.

The enzyme catalyses 5-(2-hydroxyethyl)-4-methylthiazole + ATP = 4-methyl-5-(2-phosphooxyethyl)-thiazole + ADP + H(+). It participates in cofactor biosynthesis; thiamine diphosphate biosynthesis; 4-methyl-5-(2-phosphoethyl)-thiazole from 5-(2-hydroxyethyl)-4-methylthiazole: step 1/1. Functionally, catalyzes the phosphorylation of the hydroxyl group of 4-methyl-5-beta-hydroxyethylthiazole (THZ). The protein is Hydroxyethylthiazole kinase of Listeria monocytogenes serovar 1/2a (strain ATCC BAA-679 / EGD-e).